A 150-amino-acid polypeptide reads, in one-letter code: Peptide methionine sulfoxide reductase MsrB (150 aa).

The 124-residue stretch at 9–132 (EAELKRTLTK…NSAALKFIPF (124 aa)) folds into the MsrB domain. Cys121 acts as the Nucleophile in catalysis.

The protein belongs to the MsrB Met sulfoxide reductase family.

It catalyses the reaction L-methionyl-[protein] + [thioredoxin]-disulfide + H2O = L-methionyl-(R)-S-oxide-[protein] + [thioredoxin]-dithiol. The chain is Peptide methionine sulfoxide reductase MsrB from Mycoplasma genitalium (strain ATCC 33530 / DSM 19775 / NCTC 10195 / G37) (Mycoplasmoides genitalium).